The primary structure comprises 111 residues: Nucleoid-associated protein PputGB1_3833 (111 aa).

Disordered regions lie at residues Met1–Glu25 and Glu87–Phe111.

It belongs to the YbaB/EbfC family. Homodimer.

It is found in the cytoplasm. Its subcellular location is the nucleoid. Functionally, binds to DNA and alters its conformation. May be involved in regulation of gene expression, nucleoid organization and DNA protection. This is Nucleoid-associated protein PputGB1_3833 from Pseudomonas putida (strain GB-1).